A 164-amino-acid chain; its full sequence is MTETQVTWLTQESHDRLKNELDQLIANRPVIAAEINERREEGDLKENGGYHAAREEQGQQEARIRQLQELLNSAKVGEAPTQSGVALPGSVVKVYYDGDESDTETFLIATREEGARDAKLEVYSPNSPLGGALLEAKVGDTREYNLPNGSTMKVTLLSAEPYHS.

Positions 15 to 76 (DRLKNELDQL…LQELLNSAKV (62 aa)) form a coiled coil.

It belongs to the GreA/GreB family.

Functionally, necessary for efficient RNA polymerase transcription elongation past template-encoded arresting sites. The arresting sites in DNA have the property of trapping a certain fraction of elongating RNA polymerases that pass through, resulting in locked ternary complexes. Cleavage of the nascent transcript by cleavage factors such as GreA or GreB allows the resumption of elongation from the new 3'terminus. GreA releases sequences of 2 to 3 nucleotides. The sequence is that of Transcription elongation factor GreA from Rhodococcus erythropolis (strain PR4 / NBRC 100887).